The chain runs to 596 residues: Zinc finger CCCH domain-containing protein 64 (596 aa).

Disordered regions lie at residues 243–263 (LSPTPTSTMSPAELSAKPPKT) and 272–291 (DGAAESKKRPNDSDSDSQYW). 2 consecutive C3H1-type zinc fingers follow at residues 303-331 (SQGEKLCFKFVCSGSCPRGEDCHFQHNAE) and 335-363 (QCRRGVCLDLIIKGKCEKGPECSYKHEFQ).

This Arabidopsis thaliana (Mouse-ear cress) protein is Zinc finger CCCH domain-containing protein 64.